Consider the following 177-residue polypeptide: Ribosome maturation factor RimM (177 aa).

Residues 96–177 form the PRC barrel domain; that stretch reads DNEFYWVDLI…KITVDWGLDY (82 aa).

This sequence belongs to the RimM family. In terms of assembly, binds ribosomal protein uS19.

Its subcellular location is the cytoplasm. Functionally, an accessory protein needed during the final step in the assembly of 30S ribosomal subunit, possibly for assembly of the head region. Essential for efficient processing of 16S rRNA. May be needed both before and after RbfA during the maturation of 16S rRNA. It has affinity for free ribosomal 30S subunits but not for 70S ribosomes. The protein is Ribosome maturation factor RimM of Herminiimonas arsenicoxydans.